We begin with the raw amino-acid sequence, 400 residues long: Tryptophan synthase beta chain (400 aa).

N6-(pyridoxal phosphate)lysine is present on Lys-92.

Belongs to the TrpB family. In terms of assembly, tetramer of two alpha and two beta chains. It depends on pyridoxal 5'-phosphate as a cofactor.

The catalysed reaction is (1S,2R)-1-C-(indol-3-yl)glycerol 3-phosphate + L-serine = D-glyceraldehyde 3-phosphate + L-tryptophan + H2O. It participates in amino-acid biosynthesis; L-tryptophan biosynthesis; L-tryptophan from chorismate: step 5/5. Functionally, the beta subunit is responsible for the synthesis of L-tryptophan from indole and L-serine. This is Tryptophan synthase beta chain from Chromobacterium violaceum (strain ATCC 12472 / DSM 30191 / JCM 1249 / CCUG 213 / NBRC 12614 / NCIMB 9131 / NCTC 9757 / MK).